We begin with the raw amino-acid sequence, 66 residues long: Large ribosomal subunit protein bL31 (66 aa).

4 residues coordinate Zn(2+): Cys16, Cys18, Cys36, and Cys39.

It belongs to the bacterial ribosomal protein bL31 family. Type A subfamily. Part of the 50S ribosomal subunit. Zn(2+) is required as a cofactor.

Binds the 23S rRNA. This is Large ribosomal subunit protein bL31 from Geobacillus thermodenitrificans (strain NG80-2).